The following is a 274-amino-acid chain: uncharacterized protein (274 aa).

This is an uncharacterized protein from Methanocaldococcus jannaschii (strain ATCC 43067 / DSM 2661 / JAL-1 / JCM 10045 / NBRC 100440) (Methanococcus jannaschii).